We begin with the raw amino-acid sequence, 383 residues long: Probable endoplasmic reticulum-Golgi intermediate compartment protein 3 (383 aa).

Residues 1–26 (MLISQLKKFDAYPKTVDDFRVKTYTG) are Cytoplasmic-facing. The helical transmembrane segment at 27–47 (AIVSIIGGVFILWLFFSQVTL) threads the bilayer. Residues 48 to 347 (YFSTDIHHEL…GKSFASFLTN (300 aa)) lie on the Lumenal side of the membrane. A helical membrane pass occupies residues 348–368 (VCAIIGGVFTVFGIFDSFIYY). Over 369–383 (STKNLQKKIDLGKTF) the chain is Cytoplasmic.

The protein belongs to the ERGIC family.

Its subcellular location is the endoplasmic reticulum-Golgi intermediate compartment membrane. The protein localises to the golgi apparatus. The protein resides in the cis-Golgi network membrane. It is found in the endoplasmic reticulum membrane. In terms of biological role, possible role in transport between endoplasmic reticulum and Golgi. The protein is Probable endoplasmic reticulum-Golgi intermediate compartment protein 3 (ergic3) of Dictyostelium discoideum (Social amoeba).